Consider the following 453-residue polypeptide: Divalent metal cation transporter MntH (453 aa).

A run of 11 helical transmembrane segments spans residues 39–59 (LAFL…GNWI), 66–86 (AQYG…AMLL), 114–134 (AIMF…AEVI), 146–166 (IPLI…LFIM), 175–195 (AIVG…VYIS), 217–237 (GILY…NLYL), 270–290 (LSIA…LFFG), 310–330 (PALG…ALLA), 362–382 (LITR…FKGN), 388–408 (QLLV…LIPL), and 427–447 (INII…YLII).

This sequence belongs to the NRAMP family.

Its subcellular location is the cell membrane. Its function is as follows. H(+)-stimulated, divalent metal cation uptake system. The chain is Divalent metal cation transporter MntH from Staphylococcus epidermidis (strain ATCC 12228 / FDA PCI 1200).